A 219-amino-acid polypeptide reads, in one-letter code: MYYPINEIFQTIQGEGYYTGTPSIFIRLQGCPVHCKWCDTKYTWKCNNEDQISYEKIIMKKKSNRKWSYMNVKEIILIIKIKKWTAKHIVITGGEPCLYNLLEITKELEKEDYKCQIETSGTELIKCSLNTWITLSPKINKKTLKTSILRSNEIKYPVLKKEDLFYLNSILKKIKNKKHNLIFLQPISQNEEALNICIKTCIIKNWRLSVQIHKYLKIR.

Substrate is bound by residues 12–14 and Arg27; that span reads IQG. Residues 18–219 form the Radical SAM core domain; that stretch reads YTGTPSIFIR…VQIHKYLKIR (202 aa). [4Fe-4S] cluster is bound by residues Cys31, Cys35, and Cys38. Thr40 contributes to the Mg(2+) binding site. Thr92 contributes to the substrate binding site. S-adenosyl-L-methionine-binding positions include Gly94 and 136 to 138; that span reads SPK.

It belongs to the radical SAM superfamily. 7-carboxy-7-deazaguanine synthase family. In terms of assembly, homodimer. Requires [4Fe-4S] cluster as cofactor. The cofactor is S-adenosyl-L-methionine. Mg(2+) serves as cofactor.

The enzyme catalyses 6-carboxy-5,6,7,8-tetrahydropterin + H(+) = 7-carboxy-7-deazaguanine + NH4(+). It participates in purine metabolism; 7-cyano-7-deazaguanine biosynthesis. Catalyzes the complex heterocyclic radical-mediated conversion of 6-carboxy-5,6,7,8-tetrahydropterin (CPH4) to 7-carboxy-7-deazaguanine (CDG), a step common to the biosynthetic pathways of all 7-deazapurine-containing compounds. This chain is 7-carboxy-7-deazaguanine synthase, found in Buchnera aphidicola subsp. Schizaphis graminum (strain Sg).